The following is a 151-amino-acid chain: UPF0208 membrane protein YfbV (151 aa).

At 1-45 the chain is on the cytoplasmic side; sequence MSTPDNRSVNFFSLFRRGQHYAKTWPMEKRLAPVFVENRVIRMTR. A helical membrane pass occupies residues 46-65; the sequence is YAIRFMPPVAVFTLCWQIAL. The Periplasmic portion of the chain corresponds to 66-68; the sequence is GGQ. Residues 69–91 traverse the membrane as a helical segment; sequence LGPAVATALFALSLPMQGLWWLG. The Cytoplasmic segment spans residues 92-151; sequence KRSLTPLPPSILNWFYEVRGKLQEAGQALAPVEGKPDYQALADTLKRAFKQLDKTFLDDL.

It belongs to the UPF0208 family.

It is found in the cell inner membrane. This is UPF0208 membrane protein YfbV (yfbV) from Salmonella typhi.